The primary structure comprises 1416 residues: DNA-directed RNA polymerase subunit beta' (1416 aa).

Zn(2+)-binding residues include Cys-71, Cys-73, Cys-86, and Cys-89. Mg(2+) is bound by residues Asp-461, Asp-463, and Asp-465. Zn(2+) contacts are provided by Cys-815, Cys-889, Cys-896, and Cys-899.

This sequence belongs to the RNA polymerase beta' chain family. As to quaternary structure, the RNAP catalytic core consists of 2 alpha, 1 beta, 1 beta' and 1 omega subunit. When a sigma factor is associated with the core the holoenzyme is formed, which can initiate transcription. It depends on Mg(2+) as a cofactor. Zn(2+) serves as cofactor.

The catalysed reaction is RNA(n) + a ribonucleoside 5'-triphosphate = RNA(n+1) + diphosphate. Its function is as follows. DNA-dependent RNA polymerase catalyzes the transcription of DNA into RNA using the four ribonucleoside triphosphates as substrates. This Haemophilus influenzae (strain PittEE) protein is DNA-directed RNA polymerase subunit beta'.